A 539-amino-acid chain; its full sequence is Phosphoenolpyruvate carboxykinase (ATP) (539 aa).

Substrate-binding residues include Arg64, Tyr206, and Lys212. Residues Lys212, His231, and 247–255 contribute to the ATP site; that span reads GLSGTGKTT. Lys212 and His231 together coordinate Mn(2+). Asp268 provides a ligand contact to Mn(2+). ATP contacts are provided by residues Glu296, Arg332, 448–449, and Thr454; that span reads RI. Arg332 is a binding site for substrate.

It belongs to the phosphoenolpyruvate carboxykinase (ATP) family. In terms of assembly, monomer. It depends on Mn(2+) as a cofactor.

It localises to the cytoplasm. The catalysed reaction is oxaloacetate + ATP = phosphoenolpyruvate + ADP + CO2. It participates in carbohydrate biosynthesis; gluconeogenesis. Functionally, involved in the gluconeogenesis. Catalyzes the conversion of oxaloacetate (OAA) to phosphoenolpyruvate (PEP) through direct phosphoryl transfer between the nucleoside triphosphate and OAA. The chain is Phosphoenolpyruvate carboxykinase (ATP) from Salmonella agona (strain SL483).